A 214-amino-acid polypeptide reads, in one-letter code: ATP phosphoribosyltransferase (214 aa).

This sequence belongs to the ATP phosphoribosyltransferase family. Short subfamily. In terms of assembly, heteromultimer composed of HisG and HisZ subunits.

It localises to the cytoplasm. The catalysed reaction is 1-(5-phospho-beta-D-ribosyl)-ATP + diphosphate = 5-phospho-alpha-D-ribose 1-diphosphate + ATP. It functions in the pathway amino-acid biosynthesis; L-histidine biosynthesis; L-histidine from 5-phospho-alpha-D-ribose 1-diphosphate: step 1/9. Its function is as follows. Catalyzes the condensation of ATP and 5-phosphoribose 1-diphosphate to form N'-(5'-phosphoribosyl)-ATP (PR-ATP). Has a crucial role in the pathway because the rate of histidine biosynthesis seems to be controlled primarily by regulation of HisG enzymatic activity. This is ATP phosphoribosyltransferase from Halorhodospira halophila (strain DSM 244 / SL1) (Ectothiorhodospira halophila (strain DSM 244 / SL1)).